The sequence spans 484 residues: Glycogen synthase (484 aa).

An ADP-alpha-D-glucose-binding site is contributed by Lys-15.

Belongs to the glycosyltransferase 1 family. Bacterial/plant glycogen synthase subfamily.

The enzyme catalyses [(1-&gt;4)-alpha-D-glucosyl](n) + ADP-alpha-D-glucose = [(1-&gt;4)-alpha-D-glucosyl](n+1) + ADP + H(+). The protein operates within glycan biosynthesis; glycogen biosynthesis. In terms of biological role, synthesizes alpha-1,4-glucan chains using ADP-glucose. The polypeptide is Glycogen synthase (Koribacter versatilis (strain Ellin345)).